A 142-amino-acid chain; its full sequence is Small ribosomal subunit protein uS12 (142 aa).

The segment at Met1–Pro22 is disordered. Basic residues predominate over residues Arg9–Ser19. Position 102 is a 3-methylthioaspartic acid (Asp102).

Belongs to the universal ribosomal protein uS12 family. As to quaternary structure, part of the 30S ribosomal subunit. Contacts proteins S8 and S17. May interact with IF1 in the 30S initiation complex.

In terms of biological role, with S4 and S5 plays an important role in translational accuracy. Its function is as follows. Interacts with and stabilizes bases of the 16S rRNA that are involved in tRNA selection in the A site and with the mRNA backbone. Located at the interface of the 30S and 50S subunits, it traverses the body of the 30S subunit contacting proteins on the other side and probably holding the rRNA structure together. The combined cluster of proteins S8, S12 and S17 appears to hold together the shoulder and platform of the 30S subunit. In Acetivibrio thermocellus (strain ATCC 27405 / DSM 1237 / JCM 9322 / NBRC 103400 / NCIMB 10682 / NRRL B-4536 / VPI 7372) (Clostridium thermocellum), this protein is Small ribosomal subunit protein uS12.